The primary structure comprises 471 residues: Argininosuccinate lyase (471 aa).

This sequence belongs to the lyase 1 family. Argininosuccinate lyase subfamily.

The protein localises to the cytoplasm. The catalysed reaction is 2-(N(omega)-L-arginino)succinate = fumarate + L-arginine. The protein operates within amino-acid biosynthesis; L-arginine biosynthesis; L-arginine from L-ornithine and carbamoyl phosphate: step 3/3. This is Argininosuccinate lyase from Parasynechococcus marenigrum (strain WH8102).